Reading from the N-terminus, the 266-residue chain is Integral membrane protein 2B (266 aa).

The Cytoplasmic segment spans residues 1–54 (MVKVTFNSALAQKEAKKDEPKSSEEALIAPPDAVAVDCKDPDDVVPVGQRRAWC). Residues 55–75 (WCMCFGLAFMLAGVILGGAYL) form a helical; Signal-anchor for type II membrane protein membrane-spanning segment. At 76–266 (YKYFALQPDD…KFAVETLICS (191 aa)) the chain is on the lumenal side. Residues 102–134 (EPSADAPAARYQTIEENIKIFEEDAVEFISVPV) form a necessary for interaction with APP and inhibitor effects on APP processing region. One can recognise a BRICHOS domain in the interval 137-231 (FADSDPANIV…LCHDKETYKL (95 aa)). 2 cysteine pairs are disulfide-bonded: C164–C223 and C248–C265. N-linked (GlcNAc...) asparagine glycosylation occurs at N170.

It belongs to the ITM2 family. Homodimer; disulfide-linked. Interacts with SPPL2A and SPPL2B. Interacts with APP. Mature BRI2 (mBRI2) interacts with the APP amyloid-beta A4 protein; the interaction occurs at the cell surface and in the endocytic compartments and enable alpha- and beta-secretase-induced APP cleavage inhibition. Mature BRI2 (mBRI2) interacts with the APP C99; the interaction occurs in the endocytic compartments and enable gamma-secretase-induced C99 cleavage inhibition. May form heterodimers with Bri23 peptide and APP amyloid-beta protein 40. Interacts with ADAM7 in sperm; the interaction increases following capacitation. In terms of processing, the ectodomain C-terminal part of the imBRI2 is processed by furin producing a secreted Bri23 peptide and a mature BRI2, membrane form (mBRI2). The remaining part of the ectodomain of mBRI2 containing the BRICHOS domain is cleaved by ADAM10 and is secreted (BRI2C, soluble form). The membrane-bound N-terminal fragment (BRI2C, membrane form) is further proteolytically processed by SPPL2A and SPPL2B through regulated intramembrane proteolysis producing a secreted C-peptide and a BRI2 intracellular domain (BRI2 ICD) released in the cytosol. Shedding by ADAM10 facilitates intramembrane cleavage but is not absolutely required for BRI2 ICD generation. Post-translationally, glycosylation at Asn-170 is important for cell surface localization, but doesn't affect furin- and ADAM10-induced proteolytic processing.

The protein resides in the golgi apparatus membrane. It localises to the cell membrane. Its subcellular location is the endosome membrane. The protein localises to the secreted. In terms of biological role, plays a regulatory role in the processing of the amyloid-beta A4 precursor protein (APP) and acts as an inhibitor of the amyloid-beta peptide aggregation and fibrils deposition. Plays a role in the induction of neurite outgrowth. Functions as a protease inhibitor by blocking access of secretases to APP cleavage sites. Its function is as follows. Mature BRI2 (mBRI2) functions as a modulator of the amyloid-beta A4 precursor protein (APP) processing leading to a strong reduction in the secretion of secretase-processed amyloid-beta protein 40 and amyloid-beta protein 42. Functionally, bri23 peptide prevents aggregation of APP amyloid-beta protein 42 into toxic oligomers. This chain is Integral membrane protein 2B (Itm2b), found in Rattus norvegicus (Rat).